Consider the following 137-residue polypeptide: Small ribosomal subunit protein uS9 (137 aa).

The interval 105-137 (LKTEGYLKRDPRAVERKKYGLRKARKAPQYSKR) is disordered. Residues 109 to 122 (GYLKRDPRAVERKK) are compositionally biased toward basic and acidic residues. A compositionally biased stretch (basic residues) spans 123–137 (YGLRKARKAPQYSKR).

Belongs to the universal ribosomal protein uS9 family.

The protein is Small ribosomal subunit protein uS9 of Synechococcus sp. (strain JA-3-3Ab) (Cyanobacteria bacterium Yellowstone A-Prime).